We begin with the raw amino-acid sequence, 451 residues long: Tubulin gamma-2 chain (451 aa).

Position 131 is a phosphoserine; by BRSK1 (Ser-131). 142 to 148 (AGGTGSG) lines the GTP pocket.

This sequence belongs to the tubulin family. Component of the gamma-tubulin ring complex (gTuRC) consisting of TUBGCP2, TUBGCP3, TUBGCP4, TUBGCP5 and TUBGCP6 and gamma-tubulin TUBG1 or TUBG2. TUBGCP2, TUBGCP3, TUBGCP4, TUBGCP5 and TUBGCP6 assemble in a 5:5:2:1:1 stoichiometry; each is associated with a gamma-tubulin, thereby arranging 14 gamma-tubulins in a helical manner. Gamma-tubulin at the first position is blocked by TUBGCP3 at the last position, allowing 13 protafilaments to grow into a microtubule. Interacts with alpha-beta tubulin heterodimers; the interaction allows microtubules to nucleate from the gTuRC. Phosphorylation at Ser-131 by BRSK1 regulates centrosome duplication, possibly by mediating relocation of gamma-tubulin and its associated proteins from the cytoplasm to the centrosome.

It localises to the cytoplasm. It is found in the cytoskeleton. Its subcellular location is the microtubule organizing center. The protein localises to the centrosome. Its function is as follows. Tubulin is the major constituent of microtubules, protein filaments consisting of alpha- and beta-tubulin heterodimers. Gamma-tubulin is a key component of the gamma-tubulin ring complex (gTuRC) which mediates microtubule nucleation. The gTuRC regulates the minus-end nucleation of alpha-beta tubulin heterodimers that grow into microtubule protafilaments, a critical step in centrosome duplication and spindle formation. The sequence is that of Tubulin gamma-2 chain (TUBG2) from Homo sapiens (Human).